The primary structure comprises 37 residues: Ferredoxin--NADP reductase, chloroplastic (37 aa).

NADP(+) contacts are provided by residues serine 3 and 24–25 (SR).

Belongs to the ferredoxin--NADP reductase type 1 family. The cofactor is FAD.

It localises to the plastid. The protein localises to the chloroplast stroma. It is found in the chloroplast thylakoid membrane. The enzyme catalyses 2 reduced [2Fe-2S]-[ferredoxin] + NADP(+) + H(+) = 2 oxidized [2Fe-2S]-[ferredoxin] + NADPH. It participates in energy metabolism; photosynthesis. Functionally, may play a key role in regulating the relative amounts of cyclic and non-cyclic electron flow to meet the demands of the plant for ATP and reducing power. This Imperata cylindrica (Cogon grass) protein is Ferredoxin--NADP reductase, chloroplastic.